Reading from the N-terminus, the 184-residue chain is MVDHYQVLGVTRNATKKEVKDAFRRLAIKYHPDKHAQSPEHVRHNATVRFKLVSEAYEVLNDDLKRASYNAGSDSDCFRRTSGSYSNPYGNRGGRAQGSGYGYGYGYSTRNRQASSFSSGFDSTFRYLTTRAFLLNLALAGGLYFAFTAIDTSGETLWKMRNSGKSFEEAMESIEKSKSHKDEG.

The 71-residue stretch at 3 to 73 (DHYQVLGVTR…LKRASYNAGS (71 aa)) folds into the J domain. The chain crosses the membrane as a helical span at residues 133-150 (FLLNLALAGGLYFAFTAI).

This sequence belongs to the DnaJ family. C/III subfamily.

The protein localises to the membrane. In terms of biological role, plays a continuous role in plant development probably in the structural organization of compartments. This is Chaperone protein dnaJ 72 (ATJ72) from Arabidopsis thaliana (Mouse-ear cress).